Here is a 331-residue protein sequence, read N- to C-terminus: Ketol-acid reductoisomerase (NADP(+)) (331 aa).

One can recognise a KARI N-terminal Rossmann domain in the interval 2-182; that stretch reads AKMYYDKDAD…GGTRAGVIET (181 aa). Residues 25–28, Ser-51, Ser-53, and 83–86 each bind NADP(+); these read FGSQ and DEKQ. His-108 is a catalytic residue. Residue Gly-134 participates in NADP(+) binding. A KARI C-terminal knotted domain is found at 183-328; the sequence is TFKEETETDL…KGLREMMAWI (146 aa). Positions 191, 195, 227, and 231 each coordinate Mg(2+). Position 252 (Ser-252) interacts with substrate.

Belongs to the ketol-acid reductoisomerase family. The cofactor is Mg(2+).

The catalysed reaction is (2R)-2,3-dihydroxy-3-methylbutanoate + NADP(+) = (2S)-2-acetolactate + NADPH + H(+). The enzyme catalyses (2R,3R)-2,3-dihydroxy-3-methylpentanoate + NADP(+) = (S)-2-ethyl-2-hydroxy-3-oxobutanoate + NADPH + H(+). Its pathway is amino-acid biosynthesis; L-isoleucine biosynthesis; L-isoleucine from 2-oxobutanoate: step 2/4. The protein operates within amino-acid biosynthesis; L-valine biosynthesis; L-valine from pyruvate: step 2/4. In terms of biological role, involved in the biosynthesis of branched-chain amino acids (BCAA). Catalyzes an alkyl-migration followed by a ketol-acid reduction of (S)-2-acetolactate (S2AL) to yield (R)-2,3-dihydroxy-isovalerate. In the isomerase reaction, S2AL is rearranged via a Mg-dependent methyl migration to produce 3-hydroxy-3-methyl-2-ketobutyrate (HMKB). In the reductase reaction, this 2-ketoacid undergoes a metal-dependent reduction by NADPH to yield (R)-2,3-dihydroxy-isovalerate. This chain is Ketol-acid reductoisomerase (NADP(+)), found in Thermoanaerobacter pseudethanolicus (strain ATCC 33223 / 39E) (Clostridium thermohydrosulfuricum).